A 104-amino-acid polypeptide reads, in one-letter code: Large ribosomal subunit protein uL24 (104 aa).

It belongs to the universal ribosomal protein uL24 family. In terms of assembly, part of the 50S ribosomal subunit. In terms of processing, a methylated and unmethylated form are thought to exist.

One of two assembly initiator proteins, it binds directly to the 5'-end of the 23S rRNA, where it nucleates assembly of the 50S subunit. In terms of biological role, one of the proteins that surrounds the polypeptide exit tunnel on the outside of the subunit. This chain is Large ribosomal subunit protein uL24, found in Rhodopseudomonas palustris (strain ATCC BAA-98 / CGA009).